Reading from the N-terminus, the 206-residue chain is Dephospho-CoA kinase (206 aa).

Positions 4-200 constitute a DPCK domain; that stretch reads TVALTGGIGS…ASYLKLASQF (197 aa). 12–17 is an ATP binding site; it reads GSGKST.

This sequence belongs to the CoaE family.

Its subcellular location is the cytoplasm. It catalyses the reaction 3'-dephospho-CoA + ATP = ADP + CoA + H(+). Its pathway is cofactor biosynthesis; coenzyme A biosynthesis; CoA from (R)-pantothenate: step 5/5. Functionally, catalyzes the phosphorylation of the 3'-hydroxyl group of dephosphocoenzyme A to form coenzyme A. This is Dephospho-CoA kinase from Salmonella choleraesuis (strain SC-B67).